Consider the following 202-residue polypeptide: Urease accessory protein UreE (202 aa).

The disordered stretch occupies residues 138–202 (RGAYHSHGGH…HGHHHGHKHD (65 aa)). Residues 147 to 193 (HSHDHGHAAHDHGHAAHDHGHNHDHDHGHAHGHDHQHDHNCDHDHDH) show a composition bias toward basic and acidic residues.

It belongs to the UreE family.

It is found in the cytoplasm. Involved in urease metallocenter assembly. Binds nickel. Probably functions as a nickel donor during metallocenter assembly. The chain is Urease accessory protein UreE from Rhizobium etli (strain CIAT 652).